The sequence spans 372 residues: Lung adenoma susceptibility protein 2 (372 aa).

Positions 1–31 are cleaved as a signal peptide; it reads MAKSKTKHRLCSQESSVSALLASCTLSGSNS. Ser-161 bears the Phosphoserine mark. Residues 248 to 268 are disordered; the sequence is KSPVPVNSDDSPQQTSRAKSA. Residues 255-265 show a composition bias toward polar residues; sequence SDDSPQQTSRA.

It is found in the secreted. Its function is as follows. Might play a role in cell proliferation. The sequence is that of Lung adenoma susceptibility protein 2 (LAS2) from Homo sapiens (Human).